A 513-amino-acid polypeptide reads, in one-letter code: QWRF motif-containing protein 9 (513 aa).

3 stretches are compositionally biased toward polar residues: residues 1 to 26 (MTAA…PSES), 43 to 55 (GTSS…SPKR), and 65 to 78 (VTPS…PQST). Disordered stretches follow at residues 1-89 (MTAA…RREV), 115-144 (GTLE…LSDQ), and 184-293 (VSNR…LRVR). A compositionally biased stretch (basic and acidic residues) spans 79–89 (PRRESLDRREV). 2 stretches are compositionally biased toward polar residues: residues 202–211 (ESVSSGSSNG) and 244–262 (VDSS…SPRG). The short motif at 334 to 337 (QWQF) is the QWRF motif element.

It belongs to the QWRF family.

The chain is QWRF motif-containing protein 9 (QWRF9) from Arabidopsis thaliana (Mouse-ear cress).